We begin with the raw amino-acid sequence, 260 residues long: Thiazole synthase (260 aa).

Catalysis depends on lysine 102, which acts as the Schiff-base intermediate with DXP. 1-deoxy-D-xylulose 5-phosphate-binding positions include glycine 163, 189 to 190 (AG), and 211 to 212 (NT).

This sequence belongs to the ThiG family. As to quaternary structure, homotetramer. Forms heterodimers with either ThiH or ThiS.

It is found in the cytoplasm. It carries out the reaction [ThiS sulfur-carrier protein]-C-terminal-Gly-aminoethanethioate + 2-iminoacetate + 1-deoxy-D-xylulose 5-phosphate = [ThiS sulfur-carrier protein]-C-terminal Gly-Gly + 2-[(2R,5Z)-2-carboxy-4-methylthiazol-5(2H)-ylidene]ethyl phosphate + 2 H2O + H(+). It functions in the pathway cofactor biosynthesis; thiamine diphosphate biosynthesis. Functionally, catalyzes the rearrangement of 1-deoxy-D-xylulose 5-phosphate (DXP) to produce the thiazole phosphate moiety of thiamine. Sulfur is provided by the thiocarboxylate moiety of the carrier protein ThiS. In vitro, sulfur can be provided by H(2)S. This chain is Thiazole synthase, found in Citrifermentans bemidjiense (strain ATCC BAA-1014 / DSM 16622 / JCM 12645 / Bem) (Geobacter bemidjiensis).